Consider the following 1116-residue polypeptide: Cation channel sperm-associated auxiliary subunit beta (1116 aa).

Over 1-1053 (MESPLIYVSV…QIYVDEAPLP (1053 aa)) the chain is Extracellular. A disulfide bridge connects residues cysteine 35 and cysteine 60. 5 N-linked (GlcNAc...) asparagine glycosylation sites follow: asparagine 90, asparagine 100, asparagine 118, asparagine 226, and asparagine 321. Cysteine 189 and cysteine 302 are joined by a disulfide. A disulfide bridge links cysteine 330 with cysteine 343. Residues asparagine 618 and asparagine 690 are each glycosylated (N-linked (GlcNAc...) asparagine). 4 disulfide bridges follow: cysteine 718/cysteine 816, cysteine 829/cysteine 1037, cysteine 911/cysteine 920, and cysteine 922/cysteine 937. Residues asparagine 913 and asparagine 921 are each glycosylated (N-linked (GlcNAc...) asparagine). N-linked (GlcNAc...) asparagine glycosylation is found at asparagine 1010 and asparagine 1015. The helical transmembrane segment at 1054 to 1076 (FPGHTLIAVATAVVLGGLIFIAF) threads the bilayer. Over 1077 to 1116 (MFQLQGIHPWRTFQRWIRRNQEKFSSISLSELIHRSKSEE) the chain is Cytoplasmic.

In terms of assembly, component of the CatSper complex or CatSpermasome composed of the core pore-forming members CATSPER1, CATSPER2, CATSPER3 and CATSPER4 as well as auxiliary members CATSPERB, CATSPERG, CATSPERD, CATSPERE, CATSPERZ, C2CD6/CATSPERT, TMEM249, TMEM262 and EFCAB9. HSPA1 may be an additional auxiliary complex member. The core complex members CATSPER1, CATSPER2, CATSPER3 and CATSPER4 form a heterotetrameric channel. The auxiliary CATSPERB, CATSPERG, CATSPERD and CATSPERE subunits form a pavilion-like structure over the pore which stabilizes the complex through interactions with CATSPER4, CATSPER3, CATSPER1 and CATSPER2 respectively. TMEM262/CATSPERH interacts with CATSPERB, further stabilizing the complex. C2CD6/CATSPERT interacts at least with CATSPERD and is required for targeting the CatSper complex in the flagellar membrane.

The protein resides in the cell projection. It localises to the cilium. The protein localises to the flagellum membrane. Auxiliary component of the CatSper complex, a complex involved in sperm cell hyperactivation. Sperm cell hyperactivation is needed for sperm motility which is essential late in the preparation of sperm for fertilization. This is Cation channel sperm-associated auxiliary subunit beta from Homo sapiens (Human).